A 142-amino-acid polypeptide reads, in one-letter code: Hemoglobin subunit theta-1 (142 aa).

In terms of domain architecture, Globin spans 2–142 (ALSAEDRALV…VISALVSEYR (141 aa)). Positions 59 and 88 each coordinate heme b.

This sequence belongs to the globin family.

This Homo sapiens (Human) protein is Hemoglobin subunit theta-1 (HBQ1).